A 174-amino-acid chain; its full sequence is RNA pyrophosphohydrolase (174 aa).

The Nudix hydrolase domain occupies Gly-6–Lys-149. The short motif at Gly-38–Gly-59 is the Nudix box element.

Belongs to the Nudix hydrolase family. RppH subfamily. The cofactor is a divalent metal cation.

Functionally, accelerates the degradation of transcripts by removing pyrophosphate from the 5'-end of triphosphorylated RNA, leading to a more labile monophosphorylated state that can stimulate subsequent ribonuclease cleavage. The sequence is that of RNA pyrophosphohydrolase from Neisseria meningitidis serogroup C / serotype 2a (strain ATCC 700532 / DSM 15464 / FAM18).